The sequence spans 311 residues: Glutaminase (311 aa).

Residues Ser-66, Asn-116, Glu-162, Asn-169, Tyr-193, Tyr-245, and Val-263 each contribute to the substrate site.

The protein belongs to the glutaminase family. In terms of assembly, homotetramer.

The enzyme catalyses L-glutamine + H2O = L-glutamate + NH4(+). This chain is Glutaminase, found in Rhodopseudomonas palustris (strain BisB5).